Here is a 66-residue protein sequence, read N- to C-terminus: Large ribosomal subunit protein bL33c (66 aa).

Belongs to the bacterial ribosomal protein bL33 family.

The protein localises to the plastid. It localises to the chloroplast. The polypeptide is Large ribosomal subunit protein bL33c (Cryptomeria japonica (Japanese cedar)).